The primary structure comprises 208 residues: 3-demethoxyubiquinol 3-hydroxylase (208 aa).

Fe cation contacts are provided by glutamate 57, glutamate 87, histidine 90, glutamate 139, glutamate 171, and histidine 174.

It belongs to the COQ7 family. Requires Fe cation as cofactor.

It localises to the cell membrane. The enzyme catalyses a 5-methoxy-2-methyl-3-(all-trans-polyprenyl)benzene-1,4-diol + AH2 + O2 = a 3-demethylubiquinol + A + H2O. The protein operates within cofactor biosynthesis; ubiquinone biosynthesis. Functionally, catalyzes the hydroxylation of 2-nonaprenyl-3-methyl-6-methoxy-1,4-benzoquinol during ubiquinone biosynthesis. The polypeptide is 3-demethoxyubiquinol 3-hydroxylase (Verminephrobacter eiseniae (strain EF01-2)).